A 546-amino-acid chain; its full sequence is Type II methyltransferase M.XhoI (546 aa).

The protein belongs to the N(4)/N(6)-methyltransferase family.

The catalysed reaction is a 2'-deoxyadenosine in DNA + S-adenosyl-L-methionine = an N(6)-methyl-2'-deoxyadenosine in DNA + S-adenosyl-L-homocysteine + H(+). In terms of biological role, a gamma subtype methylase, recognizes the double-stranded sequence 5'-CTCGAG-3', methylates A-5 on both strands, and protects the DNA from cleavage by the XhoI endonuclease. The protein is Type II methyltransferase M.XhoI of Xanthomonas vasicola.